We begin with the raw amino-acid sequence, 113 residues long: Replication initiation control protein YabA (113 aa).

Zn(2+) is bound by residues His-88, Cys-90, Cys-104, and Cys-107.

Belongs to the YabA family. In terms of assembly, homotetramer. Interacts with both DnaA and DnaN, acting as a bridge between these two proteins. Requires Zn(2+) as cofactor.

It localises to the cytoplasm. The protein localises to the nucleoid. Involved in control of chromosome replication initiation. Inhibits the cooperative binding of DnaA to the oriC region, thus negatively regulating initiation of chromosome replication. Inhibits the ability of DnaA-ATP to form a helix on DNA; does not disassemble preformed DnaA-DNA helices. Decreases the residence time of DnaA on the chromosome at its binding sites (oriC, replication forks and promoter-binding sites). Tethers DnaA to the replication machinery via the DNA polymerase beta sliding clamp subunit (dnaN). Associates with oriC and other DnaA targets on the chromosome in a DnaA-dependent manner. The polypeptide is Replication initiation control protein YabA (Staphylococcus saprophyticus subsp. saprophyticus (strain ATCC 15305 / DSM 20229 / NCIMB 8711 / NCTC 7292 / S-41)).